A 686-amino-acid chain; its full sequence is Asparagine-rich protein (686 aa).

The first 18 residues, 1 to 18, serve as a signal peptide directing secretion; the sequence is MKGTSALLLIGFFHATIS. Disordered regions lie at residues 34 to 73, 125 to 148, and 201 to 236; these read KRGN…DKTA, SLTS…SSSI, and ITRQ…QPPN. Positions 37 to 49 are enriched in polar residues; it reads NLNTGGQITSNSA. The segment covering 62–73 has biased composition (basic and acidic residues); that stretch reads EPPKRRNTDKTA.

In terms of tissue distribution, prismatic layer of shell (at protein level). Expressed primarily in the mantle with highest level in the mantle edge and lower level in the mantle pallium.

The protein localises to the secreted. This Margaritifera margaritifera (Freshwater pearl mussel) protein is Asparagine-rich protein.